A 367-amino-acid chain; its full sequence is Protein valois (367 aa).

WD repeat units follow at residues 101–139, 152–192, and 198–238; these read QAEH…RDSQ, AHPT…MVST, and SHTD…PSST. The segment at 309–367 is interaction with csul; it reads LAAMSNLPASVKVANVQAGHEFIYTHQDTHSRLTDAVWTDDSTLITIGHGRKMVTHAIK.

In terms of assembly, interacts with csul and tud. As to expression, in oocytes, localizes to pole plasm and nuage (at protein level). Expressed stronger in the germline than in somatic cells. In the germarium it sometimes concentrates in perinuclear aggregates that disappear by stage 2 of oogenesis. At later stages, it is uniformly distributed in the nurse cells and oocyte, as well as in young embryos, with no particular enrichment at the posterior or inside the pole cells (at protein level).

Its subcellular location is the cytoplasm. Involved in specific localization of cytoplasmic proteins during the formation of pole plasm. Required for synthesis and/or stability of oskar protein (osk) and localization of tudor (tud) in both the nuage and posterior pole of the oocyte. Required for normal posterior localization of osk in later stages of oogenesis and for posterior localization of the vasa (vas) protein during the entire process of pole plasm assembly. May act by regulating the complex that contains the arginine N-methyltransferase csul. The polypeptide is Protein valois (vls) (Drosophila melanogaster (Fruit fly)).